We begin with the raw amino-acid sequence, 394 residues long: Elongation factor Tu (394 aa).

The tr-type G domain occupies 10 to 204 (KPHINIGTIG…AVDDNIPTPE (195 aa)). The G1 stretch occupies residues 19–26 (GHVDHGKT). A GTP-binding site is contributed by 19 to 26 (GHVDHGKT). Position 26 (Thr-26) interacts with Mg(2+). The segment at 60–64 (GITIN) is G2. The interval 81-84 (DCPG) is G3. Residues 81–85 (DCPGH) and 136–139 (NKVD) contribute to the GTP site. The tract at residues 136-139 (NKVD) is G4. Residues 174–176 (SAL) are G5.

It belongs to the TRAFAC class translation factor GTPase superfamily. Classic translation factor GTPase family. EF-Tu/EF-1A subfamily. In terms of assembly, monomer.

The protein localises to the cytoplasm. The catalysed reaction is GTP + H2O = GDP + phosphate + H(+). Its function is as follows. GTP hydrolase that promotes the GTP-dependent binding of aminoacyl-tRNA to the A-site of ribosomes during protein biosynthesis. The protein is Elongation factor Tu of Chlamydia pneumoniae (Chlamydophila pneumoniae).